Consider the following 299-residue polypeptide: ATP phosphoribosyltransferase (299 aa).

The protein belongs to the ATP phosphoribosyltransferase family. Long subfamily. Equilibrium between an active dimeric form, an inactive hexameric form and higher aggregates. Interconversion between the various forms is largely reversible and is influenced by the natural substrates and inhibitors of the enzyme. Requires Mg(2+) as cofactor.

It is found in the cytoplasm. It catalyses the reaction 1-(5-phospho-beta-D-ribosyl)-ATP + diphosphate = 5-phospho-alpha-D-ribose 1-diphosphate + ATP. Its pathway is amino-acid biosynthesis; L-histidine biosynthesis; L-histidine from 5-phospho-alpha-D-ribose 1-diphosphate: step 1/9. Its activity is regulated as follows. Feedback inhibited by histidine. Functionally, catalyzes the condensation of ATP and 5-phosphoribose 1-diphosphate to form N'-(5'-phosphoribosyl)-ATP (PR-ATP). Has a crucial role in the pathway because the rate of histidine biosynthesis seems to be controlled primarily by regulation of HisG enzymatic activity. The sequence is that of ATP phosphoribosyltransferase from Pectobacterium carotovorum subsp. carotovorum (strain PC1).